We begin with the raw amino-acid sequence, 705 residues long: MSTIFSAEFAGRNISIKTGYVAGQADGAVMVIYGDTVVMVTAVSLKTAREGVDFLPLTVDYQEMTYAAGKIPGGFFKREGRPNEREILTSRVIDRSIRPLFPKGYCYETQLVATVLSVDSENDSDVAALLAASAALEISDIPFKGPIVGVRVGRVDGQFICNPSKLEQEKGDLNLYLVGRKVVPGTEGRPYDVNLVMLEGEAQQVEEEHVIAGIDFGLECMRPVIELQDQLRSALGKPKREFEAVEIDDALLAEVSEKAAVRMREAYRMSRKLDRHAALDEIRNSVLKAVTADEAGLRLRTAAALEALEKRIVRDVILKEKQRIDGRSYAEIRAISAEVGILPRAHGSALFNRGETQSLAALALGTSSDEQRLDYVAGEETRSFILHYNFPPYCVGEARPLRSPGRREIGHGNLARKALMPVIPSPEEFPYTIRIVSEILSSNGSSSMATVCGGLLCLMDGGVPVKGVVAGIAMGLLKEGEQVVILSDILGDEDHAGDMDFKVCGTSKGITAMQMDIKIDGINEDILRKALAQAREGRLFIIDKILATISEPRKELSIYAPRITTVKVKPEKVRAVIGTGGKNIRQIVSETGVTIDVEDDGTVTIASSDMEASARAIAMVRWLTEDAEVGKIYRGTVKKVVDFGAFVEILPGTEGLLHISQLAKERVNKVTDIVNEGDEVIVKVLEVDKQGKIRLSRKEALGSDI.

Residues D494 and D500 each coordinate Mg(2+). The KH domain occupies 561 to 620; the sequence is PRITTVKVKPEKVRAVIGTGGKNIRQIVSETGVTIDVEDDGTVTIASSDMEASARAIAMV. One can recognise an S1 motif domain in the interval 630 to 698; sequence GKIYRGTVKK…KQGKIRLSRK (69 aa).

The protein belongs to the polyribonucleotide nucleotidyltransferase family. It depends on Mg(2+) as a cofactor.

It is found in the cytoplasm. The catalysed reaction is RNA(n+1) + phosphate = RNA(n) + a ribonucleoside 5'-diphosphate. Functionally, involved in mRNA degradation. Catalyzes the phosphorolysis of single-stranded polyribonucleotides processively in the 3'- to 5'-direction. This Syntrophus aciditrophicus (strain SB) protein is Polyribonucleotide nucleotidyltransferase.